We begin with the raw amino-acid sequence, 422 residues long: Probable protein phosphatase 2C 69 (422 aa).

The PPM-type phosphatase domain maps to 45–294; the sequence is TLLLAEAGER…DDTTCIVVDI (250 aa). Residues Asp-70, Gly-71, Asp-246, and Asp-285 each contribute to the Mn(2+) site.

This sequence belongs to the PP2C family. The cofactor is Mg(2+). Requires Mn(2+) as cofactor.

The enzyme catalyses O-phospho-L-seryl-[protein] + H2O = L-seryl-[protein] + phosphate. The catalysed reaction is O-phospho-L-threonyl-[protein] + H2O = L-threonyl-[protein] + phosphate. The protein is Probable protein phosphatase 2C 69 of Oryza sativa subsp. japonica (Rice).